Reading from the N-terminus, the 527-residue chain is Type 2 DNA topoisomerase 6 subunit B (527 aa).

ATP is bound by residues Asn39, Asp73, 94 to 95 (SK), 103 to 110 (GVFGLGLK), and Lys421.

This sequence belongs to the TOP6B family. Homodimer. Heterotetramer of two Top6A and two Top6B chains.

It carries out the reaction ATP-dependent breakage, passage and rejoining of double-stranded DNA.. Its function is as follows. Relaxes both positive and negative superturns and exhibits a strong decatenase activity. This chain is Type 2 DNA topoisomerase 6 subunit B, found in Pyrobaculum aerophilum (strain ATCC 51768 / DSM 7523 / JCM 9630 / CIP 104966 / NBRC 100827 / IM2).